Reading from the N-terminus, the 655-residue chain is MDLLRILDTKPIPTIVDATTLGISGNTSGDYWLPTTMSLYQKELTDQIVSLHYSDILRYFETSHYKEDVILESMKTMCLNGSLVATHPYLLIDHYMPKSLITRDVPAHLAENSGKFSVLRDLINLVQEYETETAIVCRPGRTMDLLEALLLGNKVHIKRYDGHSIKSKQKANDFSCTVHLFSSEGINFTKYPIKSKARFDMLICLDTTVDTSQKDIQYLLQYKRERKGLERYAPIVRLVAINSIDHCRLFFGKKFDKNSREYLENVTAAMVILRDRLGTLPPDLRPIYSQKLHYLVEWLENPTVPWPLPDIYPLKQYTSMDVERSLLTEVHFKKSDDQLEDAFSNCSKKRGRHGANKAASSTVAGIEDNITPSFYSTKRLKNDYYTNPLKQDMTQLTGITTADNSSNVNYHLSSGIITHKLIQSMGEVYMDICVQKQELDDYSCLDDLQNDHLKFFSNEDEKIIKEYETVLRTNNENLNRSHELEVENNLKFSQIETLEKDIETLKGSLMAQGETLSKLKDAFVKTDNVQDEIEKEERVSVSRDTEKKYMEQEIKRAVDAIRENEEETHKLNEKQNGLESELKLKFEKSEISTKELNEKIGFLKKELKLENDLNEELVGQLSKTMDNLENLTIPRVRTQNGNTKKKSRAKKPGNV.

The stretch at 482-632 forms a coiled coil; the sequence is HELEVENNLK…KTMDNLENLT (151 aa). The interval 635–655 is disordered; sequence RVRTQNGNTKKKSRAKKPGNV. The span at 643–655 shows a compositional bias: basic residues; it reads TKKKSRAKKPGNV.

It belongs to the HDA2/3 family. HDA3 subfamily. In terms of assembly, heterodimer with HDA2. Component of the HDA1 histone deacetylase complex composed of at least one HDA1 homodimer and one HDA2/HDA3 heterodimer. Interacts with HDA1 and HDA3.

Its subcellular location is the nucleus. Required for activity of HDA1 histone deacetylase complex. The HDA1 histone deacetylase complex is responsible for the deacetylation of lysine residues on the N-terminal part of the core histones (H2A, H2B, H3 and H4). Histone deacetylation gives a tag for epigenetic repression and plays an important role in transcriptional regulation, cell cycle progression and developmental events. This is HDA1 complex subunit 3 (HDA3) from Saccharomyces cerevisiae (strain ATCC 204508 / S288c) (Baker's yeast).